Consider the following 255-residue polypeptide: Small ribosomal subunit protein uS2 (255 aa).

The tract at residues 232-255 (ASGRDLGASEEVPVEPALEEASEA) is disordered.

The protein belongs to the universal ribosomal protein uS2 family.

This is Small ribosomal subunit protein uS2 from Rhizobium meliloti (strain 1021) (Ensifer meliloti).